Consider the following 168-residue polypeptide: Zinc-finger homeodomain protein 14 (168 aa).

Residues 7-51 (YRECMRNHAAKLGSYAIDGCREYSQPSTGDLCVACGCHRSYHRRI) form a ZF-HD dimerization-type; degenerate zinc finger. A coiled-coil region spans residues 76–103 (ARLKWKTAEERNEEEEDDTEETSTEEKM). The segment at 82–112 (TAEERNEEEEDDTEETSTEEKMTVQRRRKSK) is disordered. Positions 86–98 (RNEEEEDDTEETS) are enriched in acidic residues. The segment at residues 106-168 (QRRRKSKFTA…WVNNNKKFYH (63 aa)) is a DNA-binding region (homeobox).

As to quaternary structure, homo- and heterodimer with other ZFHD proteins. Interacts with ZHD11. Mostly expressed in flowers and stems.

The protein localises to the nucleus. Functionally, putative transcription factor. The chain is Zinc-finger homeodomain protein 14 (ZHD14) from Arabidopsis thaliana (Mouse-ear cress).